Reading from the N-terminus, the 287-residue chain is Nuclease S1 (287 aa).

Positions 1–20 (MPRLLPISAATLALAQLTYG) are cleaved as a signal peptide. Positions 21, 26, 65, and 80 each coordinate a divalent metal cation. Residues 21–26 (WGNLGH), 65–71 (DTYKYTD), 80–83 (HFID), and 93–98 (GVDYDR) contribute to the substrate site. 2 cysteine pairs are disulfide-bonded: Cys-92–Cys-236 and Cys-100–Cys-105. Residues Asn-112 and Asn-122 are each glycosylated (N-linked (GlcNAc...) asparagine). A divalent metal cation contacts are provided by His-135, Asp-139, His-145, His-168, and Asp-172. Positions 135-183 (HIIGDIHQPLHDENLEAGGNGIDVTYDGETTNLHHIWDTNMPEEAAGGY) are substrate binding. N-linked (GlcNAc...) asparagine glycosylation occurs at Asn-248.

Belongs to the nuclease type I family. Monomer. Zn(2+) is required as a cofactor.

The catalysed reaction is Endonucleolytic cleavage to 5'-phosphomononucleotide and 5'-phosphooligonucleotide end-products.. Its activity is regulated as follows. Inhibited by inorganic phosphate (Pi). Functionally, hydrolyzes only single-stranded DNA and RNA without apparent specificity for bases. This Aspergillus oryzae (strain ATCC 42149 / RIB 40) (Yellow koji mold) protein is Nuclease S1.